The primary structure comprises 162 residues: Circumsporozoite protein-related antigen (162 aa).

Positions 1-16 (MKILSVFFLALFFIIF) are cleaved as a signal peptide. 2 disordered regions span residues 24–44 (KTNK…KGSG) and 109–162 (PFKI…GPEH). Over residues 114–130 (SSDPADNANPDADSESN) the composition is skewed to low complexity. The segment covering 137–162 (PQVTAQDVTPEQPQGDDNNLVSGPEH) has biased composition (polar residues).

The sequence is that of Circumsporozoite protein-related antigen from Plasmodium falciparum.